Reading from the N-terminus, the 182-residue chain is Helofensin-3 (182 aa).

The N-terminal stretch at 1-26 (MQMDWLFIAVISGIGLLSSGVPGTQG) is a signal peptide. Residues 27-64 (AYTTEQCRALNGSCNFYACFPKNVIIGKCDWWGWSCCA) form a C(6)C(4)C(9)C(6)CC 1; approximate repeat. A C(6)C(4)C(9)C(6)CC 2; approximate repeat occupies 65 to 101 (RTPLERCTAKKGTCTKTGCTKTDTDHGPCDGGAQCCQ). Residues 102–138 (RDPVKYCKFHGNVCGRGKCPMDHIPIGECTPGYPCCK) form a C(6)C(4)C(9)C(6)CC 3; approximate repeat. One copy of the C(6)C(4)C(9)C(6)CC 4; approximate repeat lies at 139-176 (RDGPAYCKSKGGKCLNRCPQIVPTNVIGVCATGVPCCK).

It belongs to the beta-defensin family. Helofensin subfamily. As to expression, expressed by the mandibular venom gland.

Its subcellular location is the secreted. Lethal toxin which possesses an inhibitory effect on direct electrical stimulation of the isolated hemi-diaphragm of mice. Neither hemorrhagic nor hemolytic activities are detected. Phospholipase A2 activity, proteolytic activity and arginine esterolytic activity are absent. The polypeptide is Helofensin-3 (Heloderma suspectum cinctum (Banded Gila monster)).